Consider the following 504-residue polypeptide: Pre-mRNA-processing factor 19 (504 aa).

Residue Ser-2 is modified to N-acetylserine. Positions 2–73 constitute a U-box domain; the sequence is SLICSISNEV…KPPSATSIPA (72 aa). The interval 68–223 is may mediate interaction with PSMC5; that stretch reads ATSIPAILKA…VGLHSASIPG (156 aa). An N6-acetyllysine mark is found at Lys-122, Lys-179, Lys-244, and Lys-261. A WD 1 repeat occupies 219–259; the sequence is ASIPGILALDLCPSDTNKILTGGADKNVVVFDKSSEQILAT. 6 WD repeats span residues 262–301, 304–345, 348–387, 390–429, 433–472, and 473–503; these read GHTK…CVQV, AHES…TKVT, TSGC…NVAN, GHSG…NFKT, DNNF…LHFT, and EHSG…KFYS.

This sequence belongs to the WD repeat PRP19 family. As to quaternary structure, homotetramer. Component of activated, catalytic and post-catalytic spliceosomes. Component of the Prp19 complex/PRP19C/Nineteen complex/NTC and related complexes described as PRP19-CDC5L splicing complex and PSO4 complex. A homotetramer of PRPF19, CDC5L, PLRG1 and BCAS2 constitute the core of those complexes. The interaction with CDC5L, PLRG1 and BCAS2 is direct within this core complex. At least three less stably associated proteins CTNNBL1, CWC15 and HSPA8 are found in the Prp19 complex. The Prp19 complex associates with the spliceosome during its assembly and remodeling recruiting additional proteins. Component of the XAB2 complex, a multimeric protein complex composed of XAB2, PRPF19, AQR, ZNF830, ISY1, and PPIE. Interacts with CWC22 and EIF4A3 in an RNA-independent manner. Interacts with RPA1 and RPA2; the PRP19-CDC5L complex is recruited to the sites of DNA repair where it interacts with the replication protein A complex (RPA). Interacts with SETMAR; required for SETMAR recruitment to site of DNA damage. Interacts with U2AF2; the interaction is direct and recruits the Prp19 complex to RNA polymerase II C-terminal domain (CTD) and the pre-mRNA. Interacts with PRPF3. Interacts with APEX1, DNTT and PSMB4. Interacts with PSMC5. Interacts with KNSTRN. Interacts (via N-terminus) with CDC5L. Interacts with KHDC4. Interacts with USB1. Interacts with DDX41.

The protein localises to the nucleus. It is found in the nucleoplasm. Its subcellular location is the cytoplasm. The protein resides in the cytoskeleton. It localises to the spindle. The protein localises to the lipid droplet. The catalysed reaction is S-ubiquitinyl-[E2 ubiquitin-conjugating enzyme]-L-cysteine + [acceptor protein]-L-lysine = [E2 ubiquitin-conjugating enzyme]-L-cysteine + N(6)-ubiquitinyl-[acceptor protein]-L-lysine.. Its pathway is protein modification; protein ubiquitination. In terms of biological role, ubiquitin-protein ligase which is a core component of several complexes mainly involved pre-mRNA splicing and DNA repair. Required for pre-mRNA splicing as component of the spliceosome. Core component of the PRP19C/Prp19 complex/NTC/Nineteen complex which is part of the spliceosome and participates in its assembly, its remodeling and is required for its activity. During assembly of the spliceosome, mediates 'Lys-63'-linked polyubiquitination of the U4 spliceosomal protein PRPF3. Ubiquitination of PRPF3 allows its recognition by the U5 component PRPF8 and stabilizes the U4/U5/U6 tri-snRNP spliceosomal complex. Recruited to RNA polymerase II C-terminal domain (CTD) and the pre-mRNA, it may also couple the transcriptional and spliceosomal machineries. The XAB2 complex, which contains PRPF19, is also involved in pre-mRNA splicing, transcription and transcription-coupled repair. Beside its role in pre-mRNA splicing PRPF19, as part of the PRP19-CDC5L complex, plays a role in the DNA damage response/DDR. It is recruited to the sites of DNA damage by the RPA complex where PRPF19 directly ubiquitinates RPA1 and RPA2. 'Lys-63'-linked polyubiquitination of the RPA complex allows the recruitment of the ATR-ATRIP complex and the activation of ATR, a master regulator of the DNA damage response. May also play a role in DNA double-strand break (DSB) repair by recruiting the repair factor SETMAR to altered DNA. As part of the PSO4 complex may also be involved in the DNA interstrand cross-links/ICLs repair process. In addition, may also mediate 'Lys-48'-linked polyubiquitination of substrates and play a role in proteasomal degradation. May play a role in the biogenesis of lipid droplets. May play a role in neural differentiation possibly through its function as part of the spliceosome. The sequence is that of Pre-mRNA-processing factor 19 (PRPF19) from Bos taurus (Bovine).